We begin with the raw amino-acid sequence, 197 residues long: MIPIVIEESGRGERAFDIYSRLLRERIIFLGEAVTSDSANRIVAQMLFLEAEDPEKDIYLYINSPGGSVYDGLGIFDTMQHIKPDVHTVCVGLAASMGAFLLCAGTKGKRSSLQHSRIMIHQPLGGARGQASDIRIQADEILYLKERLNQELSDRTGQPLDRIQQDTDRDFFMSPGEAVEYGLIDSVIDKRPIQAVE.

Ser96 serves as the catalytic Nucleophile. The active site involves His121.

This sequence belongs to the peptidase S14 family. Fourteen ClpP subunits assemble into 2 heptameric rings which stack back to back to give a disk-like structure with a central cavity, resembling the structure of eukaryotic proteasomes.

Its subcellular location is the cytoplasm. The catalysed reaction is Hydrolysis of proteins to small peptides in the presence of ATP and magnesium. alpha-casein is the usual test substrate. In the absence of ATP, only oligopeptides shorter than five residues are hydrolyzed (such as succinyl-Leu-Tyr-|-NHMec, and Leu-Tyr-Leu-|-Tyr-Trp, in which cleavage of the -Tyr-|-Leu- and -Tyr-|-Trp bonds also occurs).. Its function is as follows. Cleaves peptides in various proteins in a process that requires ATP hydrolysis. Has a chymotrypsin-like activity. Plays a major role in the degradation of misfolded proteins. This Parasynechococcus marenigrum (strain WH8102) protein is ATP-dependent Clp protease proteolytic subunit 2.